Here is a 73-residue protein sequence, read N- to C-terminus: Large ribosomal subunit protein bL31 (73 aa).

Residues 34–43 show a composition bias toward basic and acidic residues; that stretch reads KMNLDIDPKS. The tract at residues 34 to 54 is disordered; that stretch reads KMNLDIDPKSHPAWTGGTQQM.

This sequence belongs to the bacterial ribosomal protein bL31 family. Type A subfamily. As to quaternary structure, part of the 50S ribosomal subunit.

Its function is as follows. Binds the 23S rRNA. The chain is Large ribosomal subunit protein bL31 from Rhodopseudomonas palustris (strain BisA53).